Here is a 1294-residue protein sequence, read N- to C-terminus: RNA replication protein (1294 aa).

Residues 59-224 (NPFAVKVHSH…SHEFKQLEWL (166 aa)) form the Alphavirus-like MT domain. The 158-residue stretch at 541 to 698 (LKKQSKDWLA…TYQPFCRYYL (158 aa)) folds into the (+)RNA virus helicase ATP-binding domain. 570 to 577 (GAGGSGKS) is a binding site for ATP. Residues 699–832 (NITHRNKPDL…CVREERMNEI (134 aa)) form the (+)RNA virus helicase C-terminal domain. The RdRp catalytic domain occupies 1071–1178 (RTCFSNDFTA…DYVASVKPSF (108 aa)).

The protein belongs to the potexvirus/carlavirus RNA replication protein family.

The enzyme catalyses RNA(n) + a ribonucleoside 5'-triphosphate = RNA(n+1) + diphosphate. It catalyses the reaction ATP + H2O = ADP + phosphate + H(+). RNA replication. The central part of this protein possibly functions as an ATP-binding helicase. This Trifolium (WCMV) protein is RNA replication protein.